We begin with the raw amino-acid sequence, 277 residues long: Trypsin-2 (277 aa).

A signal peptide spans 1-19; that stretch reads MSNKIAILLLAVVVAVVAC. A propeptide spans 20-50 (activation peptide); sequence AQAQPSRRHHLVHPLLPRFLPRLHRDSNGHR. One can recognise a Peptidase S1 domain in the interval 51 to 276; sequence VVGGFQIDVS…VRDWVRENSG (226 aa). A disulfide bridge connects residues C76 and C92. Residues H91 and D136 each act as charge relay system in the active site. Intrachain disulfides connect C201–C217 and C228–C252. The Charge relay system role is filled by S232.

This sequence belongs to the peptidase S1 family. As to expression, midgut.

Its subcellular location is the secreted. It catalyses the reaction Preferential cleavage: Arg-|-Xaa, Lys-|-Xaa.. Major function may be to aid in digestion of the blood meal. The protein is Trypsin-2 (TRYP2) of Anopheles gambiae (African malaria mosquito).